Consider the following 259-residue polypeptide: AA9 family lytic polysaccharide monooxygenase E (259 aa).

A signal peptide spans 1 to 20 (MKATVLAGLAAVIAAQGVAG). The Cu(2+) site is built by His21 and His99. A disulfide bridge connects residues Cys69 and Cys193. The O2 site is built by His179 and Gln188. Position 190 (Tyr190) interacts with Cu(2+).

It belongs to the polysaccharide monooxygenase AA9 family. The cofactor is Cu(2+).

The protein localises to the secreted. The catalysed reaction is [(1-&gt;4)-beta-D-glucosyl]n+m + reduced acceptor + O2 = 4-dehydro-beta-D-glucosyl-[(1-&gt;4)-beta-D-glucosyl]n-1 + [(1-&gt;4)-beta-D-glucosyl]m + acceptor + H2O.. In terms of biological role, lytic polysaccharide monooxygenase (LPMO) that depolymerizes crystalline and amorphous polysaccharides via the oxidation of scissile alpha- or beta-(1-4)-glycosidic bonds, yielding C1 or C4 oxidation products. Catalysis by LPMOs requires the reduction of the active-site copper from Cu(II) to Cu(I) by a reducing agent and H(2)O(2) or O(2) as a cosubstrate. In Malbranchea cinnamomea (Thermophilic fungus), this protein is AA9 family lytic polysaccharide monooxygenase E.